The sequence spans 553 residues: Dihydrolipoyllysine-residue acetyltransferase component of pyruvate dehydrogenase complex (553 aa).

The 75-residue stretch at 4–78 folds into the Lipoyl-binding 1 domain; that stretch reads AIEIKVPDIG…SEGSVLVMLE (75 aa). An N6-lipoyllysine modification is found at K44. Residues 97–118 are disordered; it reads AAAAPAPAPAPAAAPAAAPAAG. The region spanning 122 to 196 is the Lipoyl-binding 2 domain; it reads TIEVKVPDIG…AEGTLLLILE (75 aa). K162 is subject to N6-lipoyllysine. Residues 250–287 enclose the Peripheral subunit-binding (PSBD) domain; sequence HASPSVRKFARELGVDVSRVPGTGPKGRITQEDVQGYV. The active site involves H526.

Belongs to the 2-oxoacid dehydrogenase family. Forms a 24-polypeptide structural core with octahedral symmetry. Requires (R)-lipoate as cofactor.

The enzyme catalyses N(6)-[(R)-dihydrolipoyl]-L-lysyl-[protein] + acetyl-CoA = N(6)-[(R)-S(8)-acetyldihydrolipoyl]-L-lysyl-[protein] + CoA. The pyruvate dehydrogenase complex catalyzes the overall conversion of pyruvate to acetyl-CoA and CO(2). It contains multiple copies of three enzymatic components: pyruvate dehydrogenase (E1), dihydrolipoamide acetyltransferase (E2) and lipoamide dehydrogenase (E3). In Cupriavidus necator (strain ATCC 17699 / DSM 428 / KCTC 22496 / NCIMB 10442 / H16 / Stanier 337) (Ralstonia eutropha), this protein is Dihydrolipoyllysine-residue acetyltransferase component of pyruvate dehydrogenase complex (pdhB).